We begin with the raw amino-acid sequence, 865 residues long: Serine/threonine-protein kinase greatwall (865 aa).

M1 bears the N-acetylmethionine mark. The 788-residue stretch at 34–821 folds into the Protein kinase domain; that stretch reads FTIVKPISRG…MRELKQHPLF (788 aa). Residues 40-48 and K61 contribute to the ATP site; that span reads ISRGAFGKV. The active-site Proton acceptor is the D155. Residues T206 and T221 each carry the phosphothreonine modification. Phosphoserine is present on residues S362 and S442. Residue T508 is modified to Phosphothreonine. Residues S545, S619, S644, and S655 each carry the phosphoserine modification. T708 carries the post-translational modification Phosphothreonine. S711 carries the phosphoserine modification. T727 carries the phosphothreonine; by CDK1 modification. One can recognise an AGC-kinase C-terminal domain in the interval 822–865; it reads SEVDWENLQHQTMPFVPQPDDETDTSYFEARNNAQHLTISGFSL. Phosphoserine occurs at positions 861 and 864.

The protein belongs to the protein kinase superfamily. AGC Ser/Thr protein kinase family. Post-translationally, phosphorylation at Thr-727 by CDK1 during M phase activates its kinase activity. Maximum phosphorylation occurs in prometaphase.

Its subcellular location is the cytoplasm. The protein localises to the cytoskeleton. It is found in the microtubule organizing center. It localises to the centrosome. The protein resides in the nucleus. It carries out the reaction L-seryl-[protein] + ATP = O-phospho-L-seryl-[protein] + ADP + H(+). The catalysed reaction is L-threonyl-[protein] + ATP = O-phospho-L-threonyl-[protein] + ADP + H(+). Functionally, serine/threonine kinase that plays a key role in M phase by acting as a regulator of mitosis entry and maintenance. Acts by promoting the inactivation of protein phosphatase 2A (PP2A) during M phase: does not directly inhibit PP2A but acts by mediating phosphorylation and subsequent activation of ARPP19 and ENSA at 'Ser-62' and 'Ser-67', respectively. ARPP19 and ENSA are phosphatase inhibitors that specifically inhibit the PPP2R2D (PR55-delta) subunit of PP2A. Inactivation of PP2A during M phase is essential to keep cyclin-B1-CDK1 activity high. Following DNA damage, it is also involved in checkpoint recovery by being inhibited. The chain is Serine/threonine-protein kinase greatwall (Mastl) from Mus musculus (Mouse).